The primary structure comprises 504 residues: Myocilin (504 aa).

Positions M1–A32 are cleaved as a signal peptide. N57 carries an N-linked (GlcNAc...) asparagine glycan. Residues L74 to Q184 are a coiled coil. Disordered regions lie at residues Q106–L131 and L170–R200. Residues G122–L131 are compositionally biased toward basic and acidic residues. Residues G244–K503 enclose the Olfactomedin-like domain. The cysteines at positions 245 and 433 are disulfide-linked. Residues D380, N428, A429, I477, and D478 each contribute to the Ca(2+) site. The short motif at S502–M504 is the Microbody targeting signal element.

As to quaternary structure, homodimer (via N-terminus). Can also form higher oligomers. Interacts with OLFM3, FN1, NRCAM, GLDN and NFASC. Interacts (via N-terminus) with MYL2. Interacts with SFRP1, FRZB, FZD7, FZD10, FZD1 and WIF1; regulates Wnt signaling. Interacts with SNTA1; regulates muscle hypertrophy. Interacts with ERBB2 and ERBB3; activates ERBB2-ERBB3 signaling pathway. Interacts with SNCG; affects its secretion and its aggregation. In terms of processing, different isoforms may arise by post-translational modifications. Glycosylated. Post-translationally, palmitoylated. In terms of processing, undergoes a calcium-dependent proteolytic cleavage at Arg-226 by CAPN2 in the endoplasmic reticulum. The result is the production of two fragments, one of 35 kDa containing the C-terminal olfactomedin-like domain, and another of 20 kDa containing the N-terminal leucine zipper-like domain. In terms of tissue distribution, detected in aqueous humor. Detected in the eye (at protein level). Widely expressed. Highly expressed in various types of muscle, ciliary body, papillary sphincter, skeletal muscle, heart, and bone marrow-derived mesenchymal stem cells. Expressed predominantly in the retina. In normal eyes, found in the inner uveal meshwork region and the anterior portion of the meshwork. In contrast, in many glaucomatous eyes, it is found in more regions of the meshwork and seems to be expressed at higher levels than in normal eyes, regardless of the type or clinical severity of glaucoma. The myocilin 35 kDa fragment is detected in aqueous humor and to a lesser extent in iris and ciliary body.

It localises to the secreted. The protein localises to the golgi apparatus. It is found in the cytoplasmic vesicle. The protein resides in the extracellular space. Its subcellular location is the extracellular matrix. It localises to the extracellular exosome. The protein localises to the mitochondrion. It is found in the mitochondrion intermembrane space. The protein resides in the mitochondrion inner membrane. Its subcellular location is the mitochondrion outer membrane. It localises to the rough endoplasmic reticulum. The protein localises to the cell projection. It is found in the cilium. The protein resides in the endoplasmic reticulum. Secreted glycoprotein regulating the activation of different signaling pathways in adjacent cells to control different processes including cell adhesion, cell-matrix adhesion, cytoskeleton organization and cell migration. Promotes substrate adhesion, spreading and formation of focal contacts. Negatively regulates cell-matrix adhesion and stress fiber assembly through Rho protein signal transduction. Modulates the organization of actin cytoskeleton by stimulating the formation of stress fibers through interactions with components of Wnt signaling pathways. Promotes cell migration through activation of PTK2 and the downstream phosphatidylinositol 3-kinase signaling. Plays a role in bone formation and promotes osteoblast differentiation in a dose-dependent manner through mitogen-activated protein kinase signaling. Mediates myelination in the peripheral nervous system through ERBB2/ERBB3 signaling. Plays a role as a regulator of muscle hypertrophy through the components of dystrophin-associated protein complex. Involved in positive regulation of mitochondrial depolarization. Plays a role in neurite outgrowth. May participate in the obstruction of fluid outflow in the trabecular meshwork. This is Myocilin (MYOC) from Homo sapiens (Human).